Here is a 256-residue protein sequence, read N- to C-terminus: Alcohol dehydrogenase (256 aa).

12–35 (FVAGLGGIGLDTSREIVKAGPKNL) serves as a coordination point for NAD(+). Substrate is bound at residue S140. Y153 (proton acceptor) is an active-site residue.

Belongs to the short-chain dehydrogenases/reductases (SDR) family. As to quaternary structure, homodimer.

It carries out the reaction a primary alcohol + NAD(+) = an aldehyde + NADH + H(+). The enzyme catalyses a secondary alcohol + NAD(+) = a ketone + NADH + H(+). This chain is Alcohol dehydrogenase (Adh), found in Zaprionus tuberculatus (Vinegar fly).